Consider the following 141-residue polypeptide: HTH-type transcriptional repressor NsrR (141 aa).

One can recognise an HTH rrf2-type domain in the interval 2 to 129 (QLTSFTDYGL…DNYTLADLVE (128 aa)). The segment at residues 28–51 (ISEVTDVYGVSRNHMVKIINQLSR) is a DNA-binding region (H-T-H motif). [2Fe-2S] cluster contacts are provided by cysteine 91, cysteine 96, and cysteine 102.

Requires [2Fe-2S] cluster as cofactor.

Its function is as follows. Nitric oxide-sensitive repressor of genes involved in protecting the cell against nitrosative stress. May require iron for activity. In Escherichia coli O139:H28 (strain E24377A / ETEC), this protein is HTH-type transcriptional repressor NsrR.